The primary structure comprises 184 residues: Protein GrpE (184 aa).

The disordered stretch occupies residues 1–32; sequence MEEQKQTPSTPTPDTAAEAAVNAATAAPETAG. Low complexity predominate over residues 12–32; that stretch reads TPDTAAEAAVNAATAAPETAG.

Belongs to the GrpE family. As to quaternary structure, homodimer.

It is found in the cytoplasm. Its function is as follows. Participates actively in the response to hyperosmotic and heat shock by preventing the aggregation of stress-denatured proteins, in association with DnaK and GrpE. It is the nucleotide exchange factor for DnaK and may function as a thermosensor. Unfolded proteins bind initially to DnaJ; upon interaction with the DnaJ-bound protein, DnaK hydrolyzes its bound ATP, resulting in the formation of a stable complex. GrpE releases ADP from DnaK; ATP binding to DnaK triggers the release of the substrate protein, thus completing the reaction cycle. Several rounds of ATP-dependent interactions between DnaJ, DnaK and GrpE are required for fully efficient folding. The sequence is that of Protein GrpE from Cupriavidus pinatubonensis (strain JMP 134 / LMG 1197) (Cupriavidus necator (strain JMP 134)).